We begin with the raw amino-acid sequence, 309 residues long: MKITILSGGTGTPKLIQGFKEILPNEDISVIVNTGEDTYIGDIYLSPDIDTVLYTFSNLINDETWYGLKGDTFFCHEQLKNFGFDEVLRIGDKDRALKMHKTSLLKKGVPMSEIVDIERKSLSINSKIYPMSDEKIESKVLIEENNEKILLKFHDFWVSRRGNAKVLDIFYENSNYAKAADGVLKAIEESDFVIIGPSNPITSIGPILSISEIKDALKEKLVFAVSPIVGENPVSGPAGTLMHAKGYPVNAVGVYEYYKDIVDVLVLDNSDINKKKEMNCEVLYANTIMKTIDDKITLARNILDYYKSR.

7,8-didemethyl-8-hydroxy-5-deazariboflavin contacts are provided by Asp-50 and Arg-89.

This sequence belongs to the CofD family. Homodimer. Mg(2+) is required as a cofactor.

The enzyme catalyses (2S)-lactyl-2-diphospho-5'-guanosine + 7,8-didemethyl-8-hydroxy-5-deazariboflavin = oxidized coenzyme F420-0 + GMP + H(+). It participates in cofactor biosynthesis; coenzyme F420 biosynthesis. In terms of biological role, catalyzes the transfer of the 2-phospholactate moiety from (2S)-lactyl-2-diphospho-5'-guanosine to 7,8-didemethyl-8-hydroxy-5-deazariboflavin (FO) with the formation of oxidized coenzyme F420-0 and GMP. This is 2-phospho-L-lactate transferase from Methanococcus maripaludis (strain DSM 14266 / JCM 13030 / NBRC 101832 / S2 / LL).